The primary structure comprises 181 residues: Oligoribonuclease (181 aa).

The Exonuclease domain maps to 8–171; sequence LIWIDLEMTG…DDIRESVAEL (164 aa). Y129 is an active-site residue.

This sequence belongs to the oligoribonuclease family.

The protein localises to the cytoplasm. Its function is as follows. 3'-to-5' exoribonuclease specific for small oligoribonucleotides. This Enterobacter sp. (strain 638) protein is Oligoribonuclease.